Here is a 513-residue protein sequence, read N- to C-terminus: GMP synthase [glutamine-hydrolyzing] (513 aa).

Residues 9–198 (LILVLDFGSQ…VRRVCDCIGE (190 aa)) enclose the Glutamine amidotransferase type-1 domain. Residue C86 is the Nucleophile of the active site. Residues H172 and E174 contribute to the active site. The 190-residue stretch at 199–388 (WSMENFIEIE…LGIPEHLVWR (190 aa)) folds into the GMPS ATP-PPase domain. 226–232 (SGGVDSS) contributes to the ATP binding site.

As to quaternary structure, homodimer.

The enzyme catalyses XMP + L-glutamine + ATP + H2O = GMP + L-glutamate + AMP + diphosphate + 2 H(+). It participates in purine metabolism; GMP biosynthesis; GMP from XMP (L-Gln route): step 1/1. In terms of biological role, catalyzes the synthesis of GMP from XMP. The polypeptide is GMP synthase [glutamine-hydrolyzing] (Staphylococcus saprophyticus subsp. saprophyticus (strain ATCC 15305 / DSM 20229 / NCIMB 8711 / NCTC 7292 / S-41)).